The following is a 160-amino-acid chain: CXXC motif containing zinc binding protein (160 aa).

Zn(2+) contacts are provided by Cys33, Cys36, Cys67, and Cys70. Position 75 is a phosphoserine (Ser75).

The protein belongs to the UPF0587 family. Monomer.

The polypeptide is CXXC motif containing zinc binding protein (Czib) (Mus musculus (Mouse)).